Reading from the N-terminus, the 407-residue chain is Protein ZNF365 (407 aa).

Ser-16 carries the post-translational modification Phosphoserine. The C2H2-type; degenerate zinc finger occupies 26 to 51; it reads LRCPRCGDHTRFRSLSSLRAHLEFSH. Ser-138 is subject to Phosphoserine. Positions 169 to 297 form a coiled coil; it reads VEAVDRTIEK…QLEYYQSQQA (129 aa). Thr-175 bears the Phosphothreonine mark. A disordered region spans residues 347-392; sequence LKKAKDDRASMQPAKAIHEQAESSRDLCRPPKKGELLGFGRKGNIR. Residues 362–381 show a composition bias toward basic and acidic residues; the sequence is AIHEQAESSRDLCRPPKKGE. At Ser-369 the chain carries Phosphoserine.

Homodimer. Interacts with NDE1 and NDEL1. Does not interact with TUBG1. Interacts with DISC1. Interacts with PARP1. Interacts with MCRS1. In terms of tissue distribution, isoform 1 is expressed in brain. Isoform 2 is expressed in placenta and at low level in lung and liver. Isoform 3 is expressed in kidney and pancreas. Isoform 1 is expressed exclusively in brain.

Its subcellular location is the cytoplasm. It localises to the cytoskeleton. It is found in the microtubule organizing center. The protein resides in the centrosome. Involved in the regulation of neurogenesis. Negatively regulates neurite outgrowth. Involved in the morphogenesis of basket cells in the somatosensory cortex during embryogenesis. Involved in the positive regulation of oligodendrocyte differentiation during postnatal growth. Involved in dendritic arborization, morphogenesis of spine density dendrite, and establishment of postsynaptic dendrite density in cortical pyramidal neurons. Involved in homologous recombination (HR) repair pathway. Required for proper resolution of DNA double-strand breaks (DSBs) by HR. Is required for recovery of stalled replication forks, and directly contributes to genomic stability. Interacts with PARP1 and mediates MRE11-dependent DNA end resection during replication fork recovery. Contributes to genomic stability by preventing telomere dysfunction. This chain is Protein ZNF365 (ZNF365), found in Homo sapiens (Human).